A 523-amino-acid chain; its full sequence is MAIRTVSSLVRALYQTPKSQSFRIFSTLLHDPPSPDLVNEISRVLSDHRNPKDDLEHTLVAYSPRVSSNLVEQVLKRCKNLGFPAHRFFLWARRIPDFAHSLESYHILVEILGSSKQFALLWDFLIEAREYNYFEISSKVFWIVFRAYSRANLPSEACRAFNRMVEFGIKPCVDDLDQLLHSLCDKKHVNHAQEFFGKAKGFGIVPSAKTYSILVRGWARIRDASGARKVFDEMLERNCVVDLLAYNALLDALCKSGDVDGGYKMFQEMGNLGLKPDAYSFAIFIHAYCDAGDVHSAYKVLDRMKRYDLVPNVYTFNHIIKTLCKNEKVDDAYLLLDEMIQKGANPDTWTYNSIMAYHCDHCEVNRATKLLSRMDRTKCLPDRHTYNMVLKLLIRIGRFDRATEIWEGMSERKFYPTVATYTVMIHGLVRKKGKLEEACRYFEMMIDEGIPPYSTTVEMLRNRLVGWGQMDVVDVLAGKMERSSSCSVQDMAVEMRGKRRRLGRRSENSEDDDDDFELERDTI.

The transit peptide at 1–5 directs the protein to the mitochondrion; the sequence is MAIRT. 10 PPR repeats span residues 101–135, 137–171, 172–206, 207–241, 242–276, 277–311, 312–346, 347–381, 382–416, and 417–452; these read SLES…NYFE, SSKV…GIKP, CVDD…GIVP, SAKT…NCVV, DLLA…GLKP, DAYS…DLVP, NVYT…GANP, DTWT…KCLP, DRHT…KFYP, and TVAT…GIPP. Positions 498-523 are disordered; that stretch reads KRRRLGRRSENSEDDDDDFELERDTI. The span at 509-523 shows a compositional bias: acidic residues; that stretch reads SEDDDDDFELERDTI.

Belongs to the PPR family. P subfamily.

The protein localises to the mitochondrion. This is Pentatricopeptide repeat-containing protein At1g52640, mitochondrial from Arabidopsis thaliana (Mouse-ear cress).